The sequence spans 140 residues: Small ribosomal subunit protein uS9 (140 aa).

It belongs to the universal ribosomal protein uS9 family.

In Desulfurococcus amylolyticus (strain DSM 18924 / JCM 16383 / VKM B-2413 / 1221n) (Desulfurococcus kamchatkensis), this protein is Small ribosomal subunit protein uS9.